We begin with the raw amino-acid sequence, 505 residues long: Maturase K (505 aa).

It belongs to the intron maturase 2 family. MatK subfamily.

It localises to the plastid. Its subcellular location is the chloroplast. Its function is as follows. Usually encoded in the trnK tRNA gene intron. Probably assists in splicing its own and other chloroplast group II introns. In Calycanthus floridus (Eastern sweetshrub), this protein is Maturase K.